Consider the following 743-residue polypeptide: MMNMKIVLFSLLLFVIRWNIISCNKNDKNQGVDMNVLNNYENLFKFVKCEYCNEHTYVKGKKAPSDPQCADIKEECKELLKEKQYTDSVTYLMDGFKSANNSANNGKKNNAEEMKNLVNFLQSHKKLIKALKKNIESIQNKKHLIYKNKSYNPLLLSCVKKMNMLKENVDYIQKNQNLFKELMNQKATYSFVNTKKKIISLKSQGHKKETSQNQNENNDNQKYQEVNDEDDVNDEEDTNDDEDTNDEEDTNDDEDTNDDEDTNDEEDTNDEEDHENNNATAYELGIVPVNDVLNVNMKNMITGNNFMDVVKNTLAQSGGLGSNDLINFLNQGKEIGENLLNITKMNLGDKNNLESFPLDELNMLKDNLINYEFILDNLKTSVLNKLKDLLLRLLYKAYVSYKKRKAQEKGLPEPTVTNEEYVEELKKGILDMGIKLLFSKVKSLLKKLKNKIFPKKKEDNQAVDTKSMEEPKVKAQPALRGVEPTEDSNIMNSINNVMDEIDFFEKELIENNNTPNVVPPTQSKKKNKNETVSGMDENFDNHPENYFKEEYYYDENDDMEVKVKKIGVTLKKFEPLKNGNVSETIKLIHLGNKDKKHIEAINNDIQIIKQELQAIYNELMNYTNGNKNIQQIFQQNILENDVLNQETEEEMEKQVEAITKQIEAEVDALAPKNKEEEEKEKEKEKEKEEKEKEEKEKEEKEKEKEEKEKEKEEKEEEKKEKEEEQEEEEEEIVPENLTTEESK.

The signal sequence occupies residues 1 to 23 (MMNMKIVLFSLLLFVIRWNIISC). Residues 77–235 (KELLKEKQYT…VNDEDDVNDE (159 aa)) are interaction with MSP1 and host SLC4A1/Band 3. 4 disordered regions span residues 202–282 (KSQG…ATAY), 459–487 (DNQAVDTKSMEEPKVKAQPALRGVEPTED), 512–540 (NNTPNVVPPTQSKKKNKNETVSGMDENFD), and 666–743 (VDAL…EESK). The span at 211–224 (SQNQNENNDNQKYQ) shows a compositional bias: polar residues. Tandem repeats lie at residues 226-231 (VNDEDD), 232-237 (VNDEED), 238-243 (TNDDED), 244-249 (TNDEED), 250-255 (TNDDED), 256-261 (TNDDED), 262-267 (TNDEED), and 268-273 (TNDEED). The 8 X 6 AA tandem repeats of [VT]-N-D-[ED]-[ED]-D stretch occupies residues 226-273 (VNDEDDVNDEEDTNDDEDTNDEEDTNDDEDTNDDEDTNDEEDTNDEED). The span at 226-274 (VNDEDDVNDEEDTNDDEDTNDEEDTNDDEDTNDDEDTNDEEDTNDEEDH) shows a compositional bias: acidic residues. The segment at 364–528 (LKDNLINYEF…PPTQSKKKNK (165 aa)) is interaction with MSP1 and host SLC4A1/Band 3. Over residues 459-473 (DNQAVDTKSMEEPKV) the composition is skewed to basic and acidic residues. The segment covering 512-521 (NNTPNVVPPT) has biased composition (low complexity). A coiled-coil region spans residues 644-732 (NQETEEEMEK…EEQEEEEEEI (89 aa)). The span at 672–722 (KNKEEEEKEKEKEKEKEEKEKEEKEKEEKEKEKEEKEKEKEEKEEEKKEKE) shows a compositional bias: basic and acidic residues. Over residues 723–733 (EEQEEEEEEIV) the composition is skewed to acidic residues.

It belongs to the plasmodium ABRA family. In terms of assembly, forms a complex composed of MSP1, MSP6, MSP7, MSP9 and MSP3; within the complex, MSP6 and MSP9 mediate the binding to the host erythrocyte. Interacts with MSP1 subunits p19 and p42; the interaction is direct. Interacts with host SLC4A1/Band 3 protein (via the 5ABC region). MSP1 subunits p19 or p42, and MSP9 form a co-ligand complex that interacts with host SLC4A1/Band 3 protein. In terms of processing, not glycosylated.

Its subcellular location is the cell membrane. The protein resides in the parasitophorous vacuole lumen. The protein localises to the secreted. Its function is as follows. During the asexual blood stage, involved in the sialic acid-independent (SAID) merozoite invasion of host erythrocytes by binding to host SLC4A1/Band 3 protein on the surface of the host erythrocyte. The protein is Merozoite surface protein 9 of Plasmodium falciparum (isolate Camp / Malaysia).